The primary structure comprises 1693 residues: 1-phosphatidylinositol 4,5-bisphosphate phosphodiesterase eta-1 (1693 aa).

The PH domain maps to 20–128; sequence SVMQSGTQMI…WITGLKYLMA (109 aa). EF-hand domains lie at 142–177, 178–214, and 226–246; these read THDQ…LNVN, LPRR…MSLR, and DKKD…EQKM. Positions 155, 157, 159, and 166 each coordinate Ca(2+). Residues 299-444 enclose the PI-PLC X-box domain; it reads QDMDQPLCNY…LKGKILVKGK (146 aa). The active site involves His-314. Residues Asn-315, Glu-344, and Asp-346 each contribute to the Ca(2+) site. His-358 is an active-site residue. Residue Glu-393 participates in Ca(2+) binding. Substrate contacts are provided by Lys-442 and Lys-444. The disordered stretch occupies residues 526–585; sequence LNAHLKQSPDVKESGKKSHGRSLMTNFGKHKKTTKSRSKSYSTDDEEDTQQSTGKEGGQL. Over residues 532–541 the composition is skewed to basic and acidic residues; the sequence is QSPDVKESGK. Positions 553-563 are enriched in basic residues; the sequence is GKHKKTTKSRS. One can recognise a PI-PLC Y-box domain in the interval 601–714; it reads LSDLVVYTNS…GYVLKPQQMC (114 aa). Substrate-binding residues include Ser-627 and Arg-654. The C2 domain occupies 715 to 843; the sequence is KGTFNPFSGD…PGYRHVYLEG (129 aa). Residues Ile-758, Asp-760, Asp-784, Asp-813, His-814, and Asp-815 each contribute to the Ca(2+) site. Residues 992 to 1005 show a composition bias toward basic and acidic residues; the sequence is IEGKENSLAEDKDG. Disordered stretches follow at residues 992 to 1014, 1052 to 1089, 1300 to 1329, and 1578 to 1613; these read IEGK…ASIK, TGEQ…PKQH, LESN…ETLK, and LSSR…GAGV. Residues 1065-1086 are compositionally biased toward polar residues; it reads RTTSNATSNCQENPCPSKSLSP. Residues 1592 to 1601 show a composition bias toward basic and acidic residues; that stretch reads RAKEKQEANK.

It depends on Ca(2+) as a cofactor. In terms of tissue distribution, expressed in brain and to a lower extent in lung. In brain, it is found in cerebrum, cerebellum and spinal cord. In embryo expressed in the notochord, developing spinal cord (in a ventral to dorsal gradient), dorsal root ganglia, cerebellum and dermatomyosome.

Its subcellular location is the cytoplasm. The protein resides in the membrane. It catalyses the reaction a 1,2-diacyl-sn-glycero-3-phospho-(1D-myo-inositol-4,5-bisphosphate) + H2O = 1D-myo-inositol 1,4,5-trisphosphate + a 1,2-diacyl-sn-glycerol + H(+). Functionally, the production of the second messenger molecules diacylglycerol (DAG) and inositol 1,4,5-trisphosphate (IP3) is mediated by calcium-activated phosphatidylinositol-specific phospholipase C enzymes. This is 1-phosphatidylinositol 4,5-bisphosphate phosphodiesterase eta-1 from Homo sapiens (Human).